The following is a 365-amino-acid chain: Phosphate acyltransferase (365 aa).

The protein belongs to the PlsX family. As to quaternary structure, homodimer. Probably interacts with PlsY.

The protein localises to the cytoplasm. The catalysed reaction is a fatty acyl-[ACP] + phosphate = an acyl phosphate + holo-[ACP]. Its pathway is lipid metabolism; phospholipid metabolism. Functionally, catalyzes the reversible formation of acyl-phosphate (acyl-PO(4)) from acyl-[acyl-carrier-protein] (acyl-ACP). This enzyme utilizes acyl-ACP as fatty acyl donor, but not acyl-CoA. The protein is Phosphate acyltransferase of Klebsiella pneumoniae (strain 342).